Consider the following 612-residue polypeptide: Protein hinderin (612 aa).

A Phosphoserine modification is found at Ser-20. Residues Leu-90–Lys-166 are a coiled coil. Position 178 is a phosphoserine (Ser-178). Residues Ile-362–Leu-406 adopt a coiled-coil conformation. The segment covering Ser-462–Asn-477 has biased composition (polar residues). 2 disordered regions span residues Ser-462 to Val-484 and Glu-509 to Glu-598. Residues Ser-471, Ser-527, and Ser-558 each carry the phosphoserine modification. 2 stretches are compositionally biased toward polar residues: residues Gln-555–His-568 and Thr-575–Lys-585.

Interacts (via N- and C-terminal domains) with SMC3 (via central hinge region).

Competes with SMC1 for binding to SMC3. May affect the availability of SMC3 to engage in the formation of multimeric protein complexes. The protein is Protein hinderin (Kiaa1328) of Mus musculus (Mouse).